A 212-amino-acid chain; its full sequence is Phosphatidylserine decarboxylase proenzyme (212 aa).

Ser182 serves as the catalytic Schiff-base intermediate with substrate; via pyruvic acid. Ser182 bears the Pyruvic acid (Ser); by autocatalysis mark.

Belongs to the phosphatidylserine decarboxylase family. PSD-A subfamily. Heterodimer of a large membrane-associated beta subunit and a small pyruvoyl-containing alpha subunit. The cofactor is pyruvate. Post-translationally, is synthesized initially as an inactive proenzyme. Formation of the active enzyme involves a self-maturation process in which the active site pyruvoyl group is generated from an internal serine residue via an autocatalytic post-translational modification. Two non-identical subunits are generated from the proenzyme in this reaction, and the pyruvate is formed at the N-terminus of the alpha chain, which is derived from the carboxyl end of the proenzyme. The post-translation cleavage follows an unusual pathway, termed non-hydrolytic serinolysis, in which the side chain hydroxyl group of the serine supplies its oxygen atom to form the C-terminus of the beta chain, while the remainder of the serine residue undergoes an oxidative deamination to produce ammonia and the pyruvoyl prosthetic group on the alpha chain.

The protein resides in the cell membrane. The enzyme catalyses a 1,2-diacyl-sn-glycero-3-phospho-L-serine + H(+) = a 1,2-diacyl-sn-glycero-3-phosphoethanolamine + CO2. It functions in the pathway phospholipid metabolism; phosphatidylethanolamine biosynthesis; phosphatidylethanolamine from CDP-diacylglycerol: step 2/2. In terms of biological role, catalyzes the formation of phosphatidylethanolamine (PtdEtn) from phosphatidylserine (PtdSer). The polypeptide is Phosphatidylserine decarboxylase proenzyme (Paraburkholderia phytofirmans (strain DSM 17436 / LMG 22146 / PsJN) (Burkholderia phytofirmans)).